Reading from the N-terminus, the 112-residue chain is 2Fe-2S ferredoxin (112 aa).

One can recognise a 2Fe-2S ferredoxin-type domain in the interval 5 to 107; that stretch reads IKVTFIINDG…GIKVRIPATT (103 aa). 4 residues coordinate [2Fe-2S] cluster: Cys42, Cys48, Cys51, and Cys88.

This sequence belongs to the adrenodoxin/putidaredoxin family. [2Fe-2S] cluster is required as a cofactor.

Functionally, ferredoxin are iron-sulfur proteins that transfer electrons in a wide variety of metabolic reactions. The protein is 2Fe-2S ferredoxin (fdxB) of Rickettsia conorii (strain ATCC VR-613 / Malish 7).